A 352-amino-acid polypeptide reads, in one-letter code: MAQTPAFNKPKVELHVHLDGAIKPETILYYGKKRGIDLPADTVEGLRNIIGMDKPLSLPDFLAKFDYYMPAIAGCREAIKRIAYEFVEMKAKEGVVYVEVRYSPHLLANSKVDPIPWNQAEGDLTPDEVVDLVNQGLQEGEQAFGIKVRSILCCMRHQPSWSPEVLELCKKYHQKTVVAMDLAGDETIEGSSLFPGHVEAYEGAVKDGIHRTVHAGEVGSAEVVREAVDILKTERVGHGYHTIEDEALYNRLLKENMHFEVCPWSSYLTGAWNPKTTHAVVRFKDDQANYSLNSDDPLIFKSTVDTDYQMVKKDMGFTEEEFKRLNINAAKSSFLPEDEKKELLERLYKEYQ.

At Ala-2 the chain carries N-acetylalanine. Residues His-15 and His-17 each coordinate Zn(2+). Residues His-17 and Asp-19 each coordinate substrate. Lys-54 carries the post-translational modification N6-acetyllysine. Residue Gly-184 participates in substrate binding. His-214 contacts Zn(2+). Catalysis depends on Glu-217, which acts as the Proton donor. N6-acetyllysine is present on Lys-232. Asp-295 contributes to the Zn(2+) binding site. Asp-296 is a substrate binding site.

It belongs to the metallo-dependent hydrolases superfamily. Adenosine and AMP deaminases family. Interacts with DPP4 (via extracellular domain). Interacts with PLG (via Kringle 4 domain); the interaction stimulates PLG activation when in complex with DPP4. The cofactor is Zn(2+). In terms of tissue distribution, detected in brain and liver (at protein level).

It localises to the cell membrane. Its subcellular location is the cell junction. The protein resides in the cytoplasmic vesicle lumen. The protein localises to the cytoplasm. It is found in the lysosome. The catalysed reaction is adenosine + H2O + H(+) = inosine + NH4(+). It catalyses the reaction 2'-deoxyadenosine + H2O + H(+) = 2'-deoxyinosine + NH4(+). It carries out the reaction cordycepin + H2O + H(+) = 3'-deoxyinosine + NH4(+). Functionally, catalyzes the hydrolytic deamination of adenosine and 2-deoxyadenosine. Plays an important role in purine metabolism and in adenosine homeostasis. Modulates signaling by extracellular adenosine, and so contributes indirectly to cellular signaling events. Acts as a positive regulator of T-cell coactivation, by binding DPP4. Its interaction with DPP4 regulates lymphocyte-epithelial cell adhesion. Enhances dendritic cell immunogenicity by affecting dendritic cell costimulatory molecule expression and cytokines and chemokines secretion. Enhances CD4+ T-cell differentiation and proliferation. Acts as a positive modulator of adenosine receptors ADORA1 and ADORA2A, by enhancing their ligand affinity via conformational change. Stimulates plasminogen activation. Plays a role in male fertility. Plays a protective role in early postimplantation embryonic development. Also responsible for the deamination of cordycepin (3'-deoxyadenosine), a fungal natural product that shows antitumor, antibacterial, antifungal, antivirus, and immune regulation properties. In Rattus norvegicus (Rat), this protein is Adenosine deaminase (Ada).